A 174-amino-acid chain; its full sequence is Late lactation protein B (174 aa).

Positions 1 to 18 are cleaved as a signal peptide; that stretch reads MKVLFLTIALSLFSILQA. The cysteines at positions 77 and 169 are disulfide-linked.

Belongs to the calycin superfamily. Lipocalin family. Mammary gland specific. Secreted in milk.

It localises to the secreted. In terms of biological role, probably serves a role in the transport of a small ligand released during the hydrolysis of milk fat. This chain is Late lactation protein B (LLPB), found in Notamacropus eugenii (Tammar wallaby).